Here is a 453-residue protein sequence, read N- to C-terminus: Plasmepsin II (453 aa).

Residues 1–37 lie on the Cytoplasmic side of the membrane; that stretch reads MDITVREHDFKHGFIKSNSTFDGLNIDNSKNKKKIQK. The propeptide occupies 1-124; the sequence is MDITVREHDF…SGLTKTNYLG (124 aa). A helical; Signal-anchor for type II membrane protein membrane pass occupies residues 38-58; it reads GFQILYVLLFCSVMCGLFYYV. Residues 59-453 lie on the Lumenal side of the membrane; it reads YENVWLQRDN…VGIALAKKNL (395 aa). One can recognise a Peptidase A1 domain in the interval 140–447; sequence FYGDAEVGDN…DYDNHSVGIA (308 aa). Asp-158 is a catalytic residue. A disulfide bridge links Cys-171 with Cys-176. The active site involves Asp-338. Cys-373 and Cys-409 form a disulfide bridge.

The protein belongs to the peptidase A1 family. In terms of assembly, component of the hemozoin formation complex (HFC) composed of falcipains FP2A and/or FP2B, plasmepsins PMII, PMIII/HAP and PMIV, heme detoxifying protein HDP and falcilysin FLN. The HFC complex is involved in hemoglobin degradation and detoxification of heme in the food vacuole during the asexual blood stage. In terms of processing, not N-glycosylated. Post-translationally, proteolytically cleaved into the soluble active mature form in the digestive vacuole by cysteine protease falcipains; the process begins at the early ring stage. Proteolysis requires an acidic environment. In absence of falcipains, autoprocessing may serve as an alternate activation system.

Its subcellular location is the membrane. The protein resides in the vacuole lumen. It localises to the vacuole membrane. It carries out the reaction Hydrolysis of the bonds linking certain hydrophobic residues in hemoglobin or globin. Also cleaves small molecules substrates such as Ala-Leu-Glu-Arg-Thr-Phe-|-Phe(NO2)-Ser-Phe-Pro-Thr.. Inhibited by pepstatin A. Functionally, during the asexual blood stage, participates in initial cleavage of native host hemoglobin (Hb) resulting in Hb denaturation. May cleave preferentially denatured hemoglobin that has been cleaved by PMI. Digestion of host Hb is an essential step which provides the parasite with amino acids for protein synthesis, and regulates osmolarity. This is Plasmepsin II from Plasmodium falciparum (isolate HB3).